An 88-amino-acid polypeptide reads, in one-letter code: Small ribosomal subunit protein bS20 (88 aa).

Belongs to the bacterial ribosomal protein bS20 family.

Its function is as follows. Binds directly to 16S ribosomal RNA. This Clostridium botulinum (strain ATCC 19397 / Type A) protein is Small ribosomal subunit protein bS20.